A 423-amino-acid chain; its full sequence is Imidazolonepropionase (423 aa).

Fe(3+) is bound by residues His78 and His80. Positions 78 and 80 each coordinate Zn(2+). 4-imidazolone-5-propanoate is bound by residues Arg87, Tyr150, and His183. Position 150 (Tyr150) interacts with N-formimidoyl-L-glutamate. Fe(3+) is bound at residue His247. His247 serves as a coordination point for Zn(2+). Glu250 is a 4-imidazolone-5-propanoate binding site. Asp322 is a binding site for Fe(3+). Asp322 contributes to the Zn(2+) binding site. Asn324 and Gly326 together coordinate N-formimidoyl-L-glutamate. Residue Ser327 participates in 4-imidazolone-5-propanoate binding.

Belongs to the metallo-dependent hydrolases superfamily. HutI family. It depends on Zn(2+) as a cofactor. Fe(3+) is required as a cofactor.

It localises to the cytoplasm. It catalyses the reaction 4-imidazolone-5-propanoate + H2O = N-formimidoyl-L-glutamate. The protein operates within amino-acid degradation; L-histidine degradation into L-glutamate; N-formimidoyl-L-glutamate from L-histidine: step 3/3. Its function is as follows. Catalyzes the hydrolytic cleavage of the carbon-nitrogen bond in imidazolone-5-propanoate to yield N-formimidoyl-L-glutamate. It is the third step in the universal histidine degradation pathway. This is Imidazolonepropionase from Bacillus cereus (strain ATCC 10987 / NRS 248).